A 313-amino-acid chain; its full sequence is Porphobilinogen deaminase (313 aa).

Cys-242 carries the S-(dipyrrolylmethanemethyl)cysteine modification.

This sequence belongs to the HMBS family. As to quaternary structure, monomer. It depends on dipyrromethane as a cofactor.

The enzyme catalyses 4 porphobilinogen + H2O = hydroxymethylbilane + 4 NH4(+). It participates in porphyrin-containing compound metabolism; protoporphyrin-IX biosynthesis; coproporphyrinogen-III from 5-aminolevulinate: step 2/4. Functionally, tetrapolymerization of the monopyrrole PBG into the hydroxymethylbilane pre-uroporphyrinogen in several discrete steps. The chain is Porphobilinogen deaminase from Escherichia coli O6:H1 (strain CFT073 / ATCC 700928 / UPEC).